A 558-amino-acid chain; its full sequence is NAD(P)H-quinone oxidoreductase chain 4 (558 aa).

15 helical membrane-spanning segments follow: residues Phe25–Val45, Trp56–Gly76, Val90–Pro110, Leu111–Phe131, Pro133–Val153, Leu157–Trp177, Phe189–Phe209, Gly230–Val250, Thr264–Met284, Phe298–Phe318, Ile327–Glu347, Ala353–Ala373, Phe397–Val417, Ile438–Met458, and Val485–Met505.

Belongs to the complex I subunit 4 family.

The protein localises to the cellular thylakoid membrane. The catalysed reaction is a plastoquinone + NADH + (n+1) H(+)(in) = a plastoquinol + NAD(+) + n H(+)(out). It catalyses the reaction a plastoquinone + NADPH + (n+1) H(+)(in) = a plastoquinol + NADP(+) + n H(+)(out). Its function is as follows. NDH-1 shuttles electrons from NAD(P)H, via FMN and iron-sulfur (Fe-S) centers, to quinones in the respiratory chain. The immediate electron acceptor for the enzyme in this species is believed to be plastoquinone. Couples the redox reaction to proton translocation (for every two electrons transferred, four hydrogen ions are translocated across the cytoplasmic membrane), and thus conserves the redox energy in a proton gradient. The chain is NAD(P)H-quinone oxidoreductase chain 4 from Synechococcus sp. (strain CC9311).